The primary structure comprises 837 residues: Outer membrane usher protein HifC (837 aa).

Residues 1–26 form the signal peptide; that stretch reads MKTKNFPLNKIAFACTLLLANPVAWA. An intrachain disulfide couples cysteine 813 to cysteine 833.

Belongs to the fimbrial export usher family.

It is found in the cell outer membrane. In terms of biological role, essential for piliation. In Haemophilus influenzae, this protein is Outer membrane usher protein HifC (hifC).